Here is a 1279-residue protein sequence, read N- to C-terminus: ATP-dependent helicase/nuclease subunit A (1279 aa).

A UvrD-like helicase ATP-binding domain is found at 4 to 499 (TKWTDEQRQA…VKLFKNFRSR (496 aa)). 25 to 32 (AGAGAGKT) serves as a coordination point for ATP. The 328-residue stretch at 526-853 (EEALKVGASY…RIMSIHKSKG (328 aa)) folds into the UvrD-like helicase C-terminal domain.

Belongs to the helicase family. AddA subfamily. In terms of assembly, heterodimer of AddA and AddB/RexB. The cofactor is Mg(2+).

The enzyme catalyses Couples ATP hydrolysis with the unwinding of duplex DNA by translocating in the 3'-5' direction.. The catalysed reaction is ATP + H2O = ADP + phosphate + H(+). The heterodimer acts as both an ATP-dependent DNA helicase and an ATP-dependent, dual-direction single-stranded exonuclease. Recognizes the chi site generating a DNA molecule suitable for the initiation of homologous recombination. The AddA nuclease domain is required for chi fragment generation; this subunit has the helicase and 3' -&gt; 5' nuclease activities. The protein is ATP-dependent helicase/nuclease subunit A of Clostridium botulinum (strain Hall / ATCC 3502 / NCTC 13319 / Type A).